The primary structure comprises 305 residues: Peroxisome biogenesis factor 2 (305 aa).

The Peroxisomal matrix portion of the chain corresponds to 1 to 15 (MAAREESTQSANRVL). The chain crosses the membrane as a helical span at residues 16-42 (RISQLDALELNKALEQLVWSQFTQCFH). The Cytoplasmic segment spans residues 43–48 (GFKPGL). A helical transmembrane segment spans residues 49 to 74 (LARFEPEVKAFLWLFLWRFTIYSKNA). Residues 75–98 (TVGQSVLNIQYKNDSSPNPVYQPP) are Peroxisomal matrix-facing. The chain crosses the membrane as a helical span at residues 99–125 (SKNQKLLYAVCTIGGRWLEERCYDLFR). Topologically, residues 126–133 (NRHLASFG) are cytoplasmic. The chain crosses the membrane as a helical span at residues 134-160 (KAKQCMNFVVGLLKLGELMNFLIFLQK). Over 161–187 (GKFATLTERLLGIHSVFCKPQSMREVG) the chain is Peroxisomal matrix. Residues 188–211 (FEYMNRELLWHGFAEFLVFLLPLI) traverse the membrane as a helical segment. Residues 212–305 (NIQKLKAKLS…GIEMSEVNAL (94 aa)) are Cytoplasmic-facing. Zn(2+)-binding residues include Cys244, Cys247, Cys259, His261, Cys264, Cys267, Cys280, and Cys283. Residues 244–284 (CALCGEWPTMPHTIGCEHVFCYYCVKSSFLFDMYFTCPKCG) form an RING-type zinc finger.

It belongs to the pex2/pex10/pex12 family. Component of the PEX2-PEX10-PEX12 retrotranslocation channel, composed of PEX2, PEX10 and PEX12. Post-translationally, forms intramolecular and intermolecular disulfide bonds in response to reactive oxygen species (ROS), promoting higher stability.

The protein localises to the peroxisome membrane. It catalyses the reaction [E2 ubiquitin-conjugating enzyme]-S-ubiquitinyl-L-cysteine + [acceptor protein]-L-cysteine = [E2 ubiquitin-conjugating enzyme]-L-cysteine + [acceptor protein]-S-ubiquitinyl-L-cysteine.. The enzyme catalyses S-ubiquitinyl-[E2 ubiquitin-conjugating enzyme]-L-cysteine + [acceptor protein]-L-lysine = [E2 ubiquitin-conjugating enzyme]-L-cysteine + N(6)-ubiquitinyl-[acceptor protein]-L-lysine.. The protein operates within protein modification; protein ubiquitination. Its function is as follows. E3 ubiquitin-protein ligase component of a retrotranslocation channel required for peroxisome organization by mediating export of the PEX5 receptor from peroxisomes to the cytosol, thereby promoting PEX5 recycling. The retrotranslocation channel is composed of PEX2, PEX10 and PEX12; each subunit contributing transmembrane segments that coassemble into an open channel that specifically allows the passage of PEX5 through the peroxisomal membrane. PEX2 also regulates peroxisome organization by acting as a E3 ubiquitin-protein ligase. PEX2 ubiquitinates PEX5 during its passage through the retrotranslocation channel: catalyzes monoubiquitination of PEX5 at 'Cys-11', a modification that acts as a signal for PEX5 extraction into the cytosol. Required for pexophagy in response to starvation by mediating ubiquitination of peroxisomal proteins, such as PEX5 and ABCD3/PMP70. Also involved in the response to reactive oxygen species (ROS) by mediating 'Lys-48'-linked polyubiquitination and subsequent degradation of PNPLA2/ATGL, thereby regulating lipolysis. The protein is Peroxisome biogenesis factor 2 (Pex2) of Rattus norvegicus (Rat).